The following is a 653-amino-acid chain: Rab proteins geranylgeranyltransferase component A 1 (653 aa).

Residues Pro606–Glu653 are disordered. A compositionally biased stretch (polar residues) spans Pro623–Gly646.

It belongs to the Rab GDI family. As to quaternary structure, monomer. Heterotrimer composed of RABGGTA, RABGGTB and CHM; within this trimer, RABGGTA and RABGGTB form the catalytic component B, while CHM (component A) mediates Rab protein binding. Can associate with the Rab GGTase dimer (RGGT or component B) prior to Rab protein binding; the association is stabilized by geranylgeranyl pyrophosphate (GGpp). The CHM:RGGT:Rab complex is destabilized by GGpp. Interacts with RAB1A, RAB1B, RAB5A, RAB7A and RAB27A and mediates their prenylation. Interacts with the non-phosphorylated forms of RAB3A, RAB3B, RAB3C, RAB3D, RAB5B, RAB5C, RAB8A, RAB8B, RAB10, RAB12, RAB35, and RAB43.

It is found in the cytoplasm. It localises to the cytosol. Substrate-binding subunit of the Rab geranylgeranyltransferase (GGTase) complex. Binds unprenylated Rab proteins and presents the substrate peptide to the catalytic component B composed of RABGGTA and RABGGTB, and remains bound to it after the geranylgeranyl transfer reaction. The component A is thought to be regenerated by transferring its prenylated Rab back to the donor membrane. Besides, a pre-formed complex consisting of CHM and the Rab GGTase dimer (RGGT or component B) can bind to and prenylate Rab proteins; this alternative pathway is proposed to be the predominant pathway for Rab protein geranylgeranylation. The sequence is that of Rab proteins geranylgeranyltransferase component A 1 (CHM) from Homo sapiens (Human).